The chain runs to 505 residues: 2-isopropylmalate synthase (505 aa).

The Pyruvate carboxyltransferase domain maps to 5-269 (IKIFDTTLRD…ETGIHTEYLY (265 aa)). Mn(2+)-binding residues include aspartate 14, histidine 204, histidine 206, and asparagine 240. The tract at residues 393 to 505 (SLLYFHTFTG…AVNRFELRKR (113 aa)) is regulatory domain.

This sequence belongs to the alpha-IPM synthase/homocitrate synthase family. LeuA type 1 subfamily. As to quaternary structure, homodimer. Mn(2+) serves as cofactor.

The protein localises to the cytoplasm. It catalyses the reaction 3-methyl-2-oxobutanoate + acetyl-CoA + H2O = (2S)-2-isopropylmalate + CoA + H(+). It participates in amino-acid biosynthesis; L-leucine biosynthesis; L-leucine from 3-methyl-2-oxobutanoate: step 1/4. Functionally, catalyzes the condensation of the acetyl group of acetyl-CoA with 3-methyl-2-oxobutanoate (2-ketoisovalerate) to form 3-carboxy-3-hydroxy-4-methylpentanoate (2-isopropylmalate). In Sediminispirochaeta smaragdinae (strain DSM 11293 / JCM 15392 / SEBR 4228) (Spirochaeta smaragdinae), this protein is 2-isopropylmalate synthase.